A 123-amino-acid chain; its full sequence is Large ribosomal subunit protein uL14 (123 aa).

This sequence belongs to the universal ribosomal protein uL14 family. As to quaternary structure, part of the 50S ribosomal subunit. Forms a cluster with proteins L3 and L19. In the 70S ribosome, L14 and L19 interact and together make contacts with the 16S rRNA in bridges B5 and B8.

Binds to 23S rRNA. Forms part of two intersubunit bridges in the 70S ribosome. This chain is Large ribosomal subunit protein uL14, found in Photobacterium profundum (strain SS9).